Consider the following 239-residue polypeptide: tRNA uridine(34) hydroxylase (239 aa).

Residues 124-214 enclose the Rhodanese domain; it reads QGRELVMLDT…GILKYFEETD (91 aa). The Cysteine persulfide intermediate role is filled by Cys178.

This sequence belongs to the TrhO family.

It catalyses the reaction uridine(34) in tRNA + AH2 + O2 = 5-hydroxyuridine(34) in tRNA + A + H2O. In terms of biological role, catalyzes oxygen-dependent 5-hydroxyuridine (ho5U) modification at position 34 in tRNAs. The polypeptide is tRNA uridine(34) hydroxylase (Bordetella parapertussis (strain 12822 / ATCC BAA-587 / NCTC 13253)).